Reading from the N-terminus, the 188-residue chain is UPF0301 protein PD_1276 (188 aa).

The protein belongs to the UPF0301 (AlgH) family.

The chain is UPF0301 protein PD_1276 from Xylella fastidiosa (strain Temecula1 / ATCC 700964).